Here is a 527-residue protein sequence, read N- to C-terminus: Probable bifunctional methylthioribulose-1-phosphate dehydratase/enolase-phosphatase E1 (527 aa).

Positions 1-244 (MAAAAAPAVA…AIKLHQLGLD (244 aa)) are methylthioribulose-1-phosphate dehydratase. A substrate-binding site is contributed by Cys-116. His-134 and His-136 together coordinate Zn(2+). Catalysis depends on Glu-159, which acts as the Proton donor/acceptor; for methylthioribulose-1-phosphate dehydratase activity. His-209 provides a ligand contact to Zn(2+). Residues 288–527 (IVLDIEGTTT…FKTINSLSEI (240 aa)) form an enolase-phosphatase E1 region. Mg(2+) is bound by residues Asp-291 and Glu-293. Substrate is bound by residues 426–427 (SS) and Lys-460. Asp-486 is a Mg(2+) binding site.

In the N-terminal section; belongs to the aldolase class II family. MtnB subfamily. This sequence in the C-terminal section; belongs to the HAD-like hydrolase superfamily. MasA/MtnC family. Zn(2+) is required as a cofactor. The cofactor is Mg(2+).

It catalyses the reaction 5-(methylsulfanyl)-D-ribulose 1-phosphate = 5-methylsulfanyl-2,3-dioxopentyl phosphate + H2O. The catalysed reaction is 5-methylsulfanyl-2,3-dioxopentyl phosphate + H2O = 1,2-dihydroxy-5-(methylsulfanyl)pent-1-en-3-one + phosphate. It functions in the pathway amino-acid biosynthesis; L-methionine biosynthesis via salvage pathway; L-methionine from S-methyl-5-thio-alpha-D-ribose 1-phosphate: step 2/6. Its pathway is amino-acid biosynthesis; L-methionine biosynthesis via salvage pathway; L-methionine from S-methyl-5-thio-alpha-D-ribose 1-phosphate: step 3/6. It participates in amino-acid biosynthesis; L-methionine biosynthesis via salvage pathway; L-methionine from S-methyl-5-thio-alpha-D-ribose 1-phosphate: step 4/6. This is Probable bifunctional methylthioribulose-1-phosphate dehydratase/enolase-phosphatase E1 from Ricinus communis (Castor bean).